Here is a 400-residue protein sequence, read N- to C-terminus: Deoxyguanosinetriphosphate triphosphohydrolase-like protein (400 aa).

The 143-residue stretch at 73–215 (RLTHSIEVSQ…AAIADDIAYN (143 aa)) folds into the HD domain.

This sequence belongs to the dGTPase family. Type 2 subfamily.

The polypeptide is Deoxyguanosinetriphosphate triphosphohydrolase-like protein (Bartonella tribocorum (strain CIP 105476 / IBS 506)).